Here is a 185-residue protein sequence, read N- to C-terminus: Elongation factor P (185 aa).

The protein belongs to the elongation factor P family.

It localises to the cytoplasm. Its pathway is protein biosynthesis; polypeptide chain elongation. Involved in peptide bond synthesis. Stimulates efficient translation and peptide-bond synthesis on native or reconstituted 70S ribosomes in vitro. Probably functions indirectly by altering the affinity of the ribosome for aminoacyl-tRNA, thus increasing their reactivity as acceptors for peptidyl transferase. The sequence is that of Elongation factor P from Staphylococcus saprophyticus subsp. saprophyticus (strain ATCC 15305 / DSM 20229 / NCIMB 8711 / NCTC 7292 / S-41).